Here is a 741-residue protein sequence, read N- to C-terminus: uncharacterized protein (741 aa).

The stretch at V64–V103 forms a coiled coil. Over residues F137–L155 the composition is skewed to polar residues. Disordered stretches follow at residues F137–P214, R280–S318, and S330–P364. 2 stretches are compositionally biased toward low complexity: residues R161–T173 and K197–A209. Over residues S298–P308 the composition is skewed to polar residues. Composition is skewed to low complexity over residues S309–S318 and S330–S344. Residues P346–A356 are compositionally biased toward polar residues. G499–T506 contacts ATP.

It belongs to the AAA ATPase family.

Its subcellular location is the cytoplasm. The protein localises to the nucleus. This is an uncharacterized protein from Schizosaccharomyces pombe (strain 972 / ATCC 24843) (Fission yeast).